The chain runs to 205 residues: Guanylate kinase (205 aa).

Positions 5–183 constitute a Guanylate kinase-like domain; it reads GLLIVFSGPS…AAERVKKIIE (179 aa). 12 to 19 is an ATP binding site; sequence GPSGVGKG.

Belongs to the guanylate kinase family.

Its subcellular location is the cytoplasm. The enzyme catalyses GMP + ATP = GDP + ADP. In terms of biological role, essential for recycling GMP and indirectly, cGMP. In Lactococcus lactis subsp. lactis (strain IL1403) (Streptococcus lactis), this protein is Guanylate kinase (gmk).